The following is a 145-amino-acid chain: UPF0310 protein PH1033 (145 aa).

It belongs to the UPF0310 family.

In Pyrococcus horikoshii (strain ATCC 700860 / DSM 12428 / JCM 9974 / NBRC 100139 / OT-3), this protein is UPF0310 protein PH1033.